Reading from the N-terminus, the 234-residue chain is Opacity protein opA55 (234 aa).

Residue alanine 1 is a signal peptide.

This sequence belongs to the opacity porin family.

Its subcellular location is the cell outer membrane. Implicated in a number of adherence functions. OPA proteins are implicated in pathogenesis and are subject to phase variation. This chain is Opacity protein opA55 (opaE), found in Neisseria gonorrhoeae.